A 250-amino-acid chain; its full sequence is Lymphocyte function-associated antigen 3 (250 aa).

An N-terminal signal peptide occupies residues 1–28 (MVAGSDAGRALGVLSVVCLLHCFGFISC). Residues 29 to 215 (FSQQIYGVVY…IPSSGHSRHR (187 aa)) are Extracellular-facing. In terms of domain architecture, Ig-like spans 30–121 (SQQIYGVVYG…DTMKFFLYVL (92 aa)). N-linked (GlcNAc...) asparagine glycosylation is found at asparagine 40, asparagine 94, asparagine 109, asparagine 135, asparagine 169, and asparagine 195. Cysteine 142 and cysteine 187 are oxidised to a cystine. The helical transmembrane segment at 216-238 (YALIPIPLAVITTCIVLYMNGIL) threads the bilayer. Residues 239-250 (KCDRKPDRTNSN) are Cytoplasmic-facing.

Interacts with CD2. Interacts with CMTM6. In terms of assembly, (Microbial infection) Interacts with human cytomegalovirus protein UL148; this interaction retains immature CD58 intracellularly.

Its subcellular location is the cell membrane. In terms of biological role, ligand of the T-lymphocyte CD2 glycoprotein. This interaction is important in mediating thymocyte interactions with thymic epithelial cells, antigen-independent and -dependent interactions of T-lymphocytes with target cells and antigen-presenting cells and the T-lymphocyte rosetting with erythrocytes. In addition, the LFA-3/CD2 interaction may prime response by both the CD2+ and LFA-3+ cells. In Homo sapiens (Human), this protein is Lymphocyte function-associated antigen 3 (CD58).